The sequence spans 414 residues: Particulate methane monooxygenase alpha subunit (414 aa).

An N-terminal signal peptide occupies residues 1-32 (MKTIKDRIAKWSAIGLLSAVAATAFYAPSASA). The Cu cation site is built by His33, His48, His72, His137, and His139. The cupredoxin domain used to construct soluble pmoB (spmoB) stretch occupies residues 33–172 (HGEKSQAAFM…MSEFRNPVTT (140 aa)). Transmembrane regions (helical) follow at residues 186 to 206 (GNTY…IGYW) and 235 to 255 (VAMG…SSAN). The segment at 265-414 (QAGTMRGMKP…IDAPLIPSFM (150 aa)) is cupredoxin domain used to construct soluble pmoB (spmoB).

As to quaternary structure, m.capsulatus has two forms of methane monooxygenase, a soluble (sMMO) and a membrane-bound (particulate) type (pMMO). The particulate type is a nonamer composed of three alpha:beta:gamma heterotrimeric protomers assembled into a cylindrical structure; the beta and gamma subunits comprise the bulk of the membrane-spanning regions and the soluble regions are derived primarily from alpha subunits which form two antiparallel beta-barrel-like structures each. This assembly, also called pMMO hydroxylase (pMMO-H), is proposed to associate with methanol dehydrogenase (MDH), also designated as pMMO-R, to form the pMMO-C complex which seems to have greater methane monooxygenase activity. Cu(2+) serves as cofactor.

It localises to the membrane. The enzyme catalyses methane + a quinol + O2 = methanol + a quinone + H2O. Methane monooxygenase is responsible for the initial oxygenation of methane to methanol in methanotrophs. At least in vitro, specific quinols can replace NADH as reductants. This is Particulate methane monooxygenase alpha subunit (pmoB1) from Methylococcus capsulatus (strain ATCC 33009 / NCIMB 11132 / Bath).